The sequence spans 307 residues: Ribosomal protein L11 methyltransferase (307 aa).

4 residues coordinate S-adenosyl-L-methionine: Thr156, Gly177, Asp199, and Asn243.

Belongs to the methyltransferase superfamily. PrmA family.

The protein localises to the cytoplasm. The catalysed reaction is L-lysyl-[protein] + 3 S-adenosyl-L-methionine = N(6),N(6),N(6)-trimethyl-L-lysyl-[protein] + 3 S-adenosyl-L-homocysteine + 3 H(+). Methylates ribosomal protein L11. The protein is Ribosomal protein L11 methyltransferase of Syntrophomonas wolfei subsp. wolfei (strain DSM 2245B / Goettingen).